A 370-amino-acid chain; its full sequence is 3-dehydroquinate synthase (370 aa).

Residues 112-116 (GVIGD), 136-137 (TT), lysine 149, lysine 158, and 176-179 (TLAT) each bind NAD(+). 3 residues coordinate Zn(2+): glutamate 191, histidine 254, and histidine 276.

The protein belongs to the sugar phosphate cyclases superfamily. Dehydroquinate synthase family. Co(2+) serves as cofactor. Zn(2+) is required as a cofactor. The cofactor is NAD(+).

It localises to the cytoplasm. The enzyme catalyses 7-phospho-2-dehydro-3-deoxy-D-arabino-heptonate = 3-dehydroquinate + phosphate. It functions in the pathway metabolic intermediate biosynthesis; chorismate biosynthesis; chorismate from D-erythrose 4-phosphate and phosphoenolpyruvate: step 2/7. Its function is as follows. Catalyzes the conversion of 3-deoxy-D-arabino-heptulosonate 7-phosphate (DAHP) to dehydroquinate (DHQ). This is 3-dehydroquinate synthase from Xylella fastidiosa (strain M23).